The primary structure comprises 383 residues: Carbamoyl phosphate synthase small chain (383 aa).

A CPSase region spans residues 1–190 (MPHPSSRQAH…FDQRLKQHPD (190 aa)). Residues Ser51, Gly242, and Gly244 each contribute to the L-glutamine site. Residues 194-381 (RVVAIDFGIK…VALMADRRDV (188 aa)) enclose the Glutamine amidotransferase type-1 domain. Residue Cys271 is the Nucleophile of the active site. L-glutamine is bound by residues Leu272, Gln275, Asn311, Gly313, and Phe314. Catalysis depends on residues His354 and Glu356.

The protein belongs to the CarA family. As to quaternary structure, composed of two chains; the small (or glutamine) chain promotes the hydrolysis of glutamine to ammonia, which is used by the large (or ammonia) chain to synthesize carbamoyl phosphate. Tetramer of heterodimers (alpha,beta)4.

The catalysed reaction is hydrogencarbonate + L-glutamine + 2 ATP + H2O = carbamoyl phosphate + L-glutamate + 2 ADP + phosphate + 2 H(+). It carries out the reaction L-glutamine + H2O = L-glutamate + NH4(+). Its pathway is amino-acid biosynthesis; L-arginine biosynthesis; carbamoyl phosphate from bicarbonate: step 1/1. The protein operates within pyrimidine metabolism; UMP biosynthesis via de novo pathway; (S)-dihydroorotate from bicarbonate: step 1/3. Functionally, small subunit of the glutamine-dependent carbamoyl phosphate synthetase (CPSase). CPSase catalyzes the formation of carbamoyl phosphate from the ammonia moiety of glutamine, carbonate, and phosphate donated by ATP, constituting the first step of 2 biosynthetic pathways, one leading to arginine and/or urea and the other to pyrimidine nucleotides. The small subunit (glutamine amidotransferase) binds and cleaves glutamine to supply the large subunit with the substrate ammonia. This chain is Carbamoyl phosphate synthase small chain, found in Parasynechococcus marenigrum (strain WH8102).